Consider the following 263-residue polypeptide: Tryptophan 2,3-dioxygenase (263 aa).

Substrate is bound by residues 32 to 36 (FIVIH), Y94, and R98. H221 lines the heme pocket. T235 contacts substrate.

Belongs to the tryptophan 2,3-dioxygenase family. Homotetramer. The cofactor is heme.

The catalysed reaction is L-tryptophan + O2 = N-formyl-L-kynurenine. It functions in the pathway amino-acid degradation; L-tryptophan degradation via kynurenine pathway; L-kynurenine from L-tryptophan: step 1/2. Its function is as follows. Heme-dependent dioxygenase that catalyzes the oxidative cleavage of the L-tryptophan (L-Trp) pyrrole ring and converts L-tryptophan to N-formyl-L-kynurenine. Catalyzes the oxidative cleavage of the indole moiety. In Caulobacter vibrioides (strain ATCC 19089 / CIP 103742 / CB 15) (Caulobacter crescentus), this protein is Tryptophan 2,3-dioxygenase.